Consider the following 950-residue polypeptide: A disintegrin and metalloproteinase with thrombospondin motifs 15 (950 aa).

The signal sequence occupies residues 1–18 (MLLLGISILALAWRPAGS). Positions 19 to 212 (SEPEWEVVVP…NRRRSGRAKR (194 aa)) are excised as a propeptide. Asn141 carries N-linked (GlcNAc...) asparagine glycosylation. Positions 144-172 (APEAQRHSQGAHLLQRRGAPVGPSGDPTS) are disordered. The Cysteine switch motif lies at 172–179 (SRCGVASG). Cys174 contributes to the Zn(2+) binding site. The Peptidase M12B domain occupies 218-427 (RYVETLVVAD…GHGDCLLDQP (210 aa)). Disulfide bonds link Cys293–Cys345, Cys322–Cys327, Cys339–Cys422, Cys377–Cys406, Cys448–Cys470, Cys459–Cys480, Cys465–Cys499, Cys493–Cys504, Cys528–Cys565, Cys532–Cys570, and Cys543–Cys555. His361 contributes to the Zn(2+) binding site. Glu362 is a catalytic residue. Residues His365 and His371 each contribute to the Zn(2+) site. Positions 428–515 (SKPITLPEDL…ERHNPNKYRV (88 aa)) constitute a Disintegrin domain. Residues 516-571 (DGSWAKWEPYGSCSRTCGGGVQLARRQCSNPTPANGGKYCEGVRVKYRSCNLEPCP) form the TSP type-1 1 domain. Residues Asn591, Asn623, and Asn679 are each glycosylated (N-linked (GlcNAc...) asparagine). Residues 701–838 (AIPAGASSID…SNQVEQPDNR (138 aa)) are spacer. The segment at 798–822 (FYLPKEPREDKSTRPKDPRGSPVLR) is disordered. Basic and acidic residues predominate over residues 802–816 (KEPREDKSTRPKDPR). TSP type-1 domains lie at 839 to 895 (PPAR…EPCP) and 896 to 949 (TWEL…VLRP).

Requires Zn(2+) as cofactor. In terms of processing, the precursor is cleaved by a furin endopeptidase. Post-translationally, glycosylated. Can be O-fucosylated by POFUT2 on a serine or a threonine residue found within the consensus sequence C1-X(2)-(S/T)-C2-G of the TSP type-1 repeat domains where C1 and C2 are the first and second cysteine residue of the repeat, respectively. Fucosylated repeats can then be further glycosylated by the addition of a beta-1,3-glucose residue by the glucosyltransferase, B3GALTL. Fucosylation mediates the efficient secretion of ADAMTS family members. Can be C-glycosylated with one or two mannose molecules on tryptophan residues within the consensus sequence W-X-X-W of the TPRs. Also N-glycosylated. These other glycosylations can also facilitate secretion. In the adult colon, highly expressed in the muscularis externa (inner circular smooth muscle and outer longitudinal smooth muscle), muscularis mucosa, submucosal glands, crypt, villi epithelial cells, goblet cells and lamina propria. Expressed at perimuscular and peritendious areas in the developing limbs.

It is found in the secreted. It localises to the extracellular space. The protein resides in the extracellular matrix. The protein localises to the cell surface. Metalloprotease which has proteolytic activity against the proteoglycan VCAN, cleaving it at the 'Glu-1401-|-1402-Ala' site. Cleaves VCAN in the pericellular matrix surrounding myoblasts, facilitating myoblast contact and fusion which is required for skeletal muscle development and regeneration. This Mus musculus (Mouse) protein is A disintegrin and metalloproteinase with thrombospondin motifs 15 (Adamts15).